A 425-amino-acid chain; its full sequence is Serine--tRNA ligase (425 aa).

Residue 230–232 coordinates L-serine; sequence TAE. 261-263 contacts ATP; sequence RSE. L-serine is bound at residue Glu-284. Residue 348 to 351 coordinates ATP; that stretch reads EISS. L-serine is bound at residue Ser-384.

The protein belongs to the class-II aminoacyl-tRNA synthetase family. Type-1 seryl-tRNA synthetase subfamily. Homodimer. The tRNA molecule binds across the dimer.

The protein resides in the cytoplasm. It carries out the reaction tRNA(Ser) + L-serine + ATP = L-seryl-tRNA(Ser) + AMP + diphosphate + H(+). It catalyses the reaction tRNA(Sec) + L-serine + ATP = L-seryl-tRNA(Sec) + AMP + diphosphate + H(+). It functions in the pathway aminoacyl-tRNA biosynthesis; selenocysteinyl-tRNA(Sec) biosynthesis; L-seryl-tRNA(Sec) from L-serine and tRNA(Sec): step 1/1. Its function is as follows. Catalyzes the attachment of serine to tRNA(Ser). Is also able to aminoacylate tRNA(Sec) with serine, to form the misacylated tRNA L-seryl-tRNA(Sec), which will be further converted into selenocysteinyl-tRNA(Sec). This Streptococcus equi subsp. zooepidemicus (strain MGCS10565) protein is Serine--tRNA ligase.